The primary structure comprises 238 residues: Pyridoxine 5'-phosphate synthase (238 aa).

A 3-amino-2-oxopropyl phosphate-binding site is contributed by Asn-7. 1-deoxy-D-xylulose 5-phosphate is bound at residue 9–10 (DH). Arg-18 lines the 3-amino-2-oxopropyl phosphate pocket. The active-site Proton acceptor is His-43. 1-deoxy-D-xylulose 5-phosphate contacts are provided by Arg-45 and His-50. Glu-70 functions as the Proton acceptor in the catalytic mechanism. Residue Thr-100 participates in 1-deoxy-D-xylulose 5-phosphate binding. His-190 acts as the Proton donor in catalysis. 3-amino-2-oxopropyl phosphate contacts are provided by residues Gly-191 and 212 to 213 (GH).

The protein belongs to the PNP synthase family. In terms of assembly, homooctamer; tetramer of dimers.

The protein resides in the cytoplasm. The enzyme catalyses 3-amino-2-oxopropyl phosphate + 1-deoxy-D-xylulose 5-phosphate = pyridoxine 5'-phosphate + phosphate + 2 H2O + H(+). It participates in cofactor biosynthesis; pyridoxine 5'-phosphate biosynthesis; pyridoxine 5'-phosphate from D-erythrose 4-phosphate: step 5/5. Its function is as follows. Catalyzes the complicated ring closure reaction between the two acyclic compounds 1-deoxy-D-xylulose-5-phosphate (DXP) and 3-amino-2-oxopropyl phosphate (1-amino-acetone-3-phosphate or AAP) to form pyridoxine 5'-phosphate (PNP) and inorganic phosphate. The sequence is that of Pyridoxine 5'-phosphate synthase from Prochlorococcus marinus subsp. pastoris (strain CCMP1986 / NIES-2087 / MED4).